A 635-amino-acid chain; its full sequence is Threonine--tRNA ligase (635 aa).

The TGS domain occupies Met1–Thr61. Residues Asp242–Pro533 form a catalytic region. Zn(2+) is bound by residues Cys333, His384, and His510.

This sequence belongs to the class-II aminoacyl-tRNA synthetase family. As to quaternary structure, homodimer. Requires Zn(2+) as cofactor.

The protein resides in the cytoplasm. The catalysed reaction is tRNA(Thr) + L-threonine + ATP = L-threonyl-tRNA(Thr) + AMP + diphosphate + H(+). Functionally, catalyzes the attachment of threonine to tRNA(Thr) in a two-step reaction: L-threonine is first activated by ATP to form Thr-AMP and then transferred to the acceptor end of tRNA(Thr). Also edits incorrectly charged L-seryl-tRNA(Thr). This is Threonine--tRNA ligase from Janthinobacterium sp. (strain Marseille) (Minibacterium massiliensis).